A 257-amino-acid chain; its full sequence is Imidazole glycerol phosphate synthase subunit HisF (257 aa).

Residues aspartate 11 and aspartate 130 contribute to the active site.

This sequence belongs to the HisA/HisF family. Heterodimer of HisH and HisF.

Its subcellular location is the cytoplasm. It catalyses the reaction 5-[(5-phospho-1-deoxy-D-ribulos-1-ylimino)methylamino]-1-(5-phospho-beta-D-ribosyl)imidazole-4-carboxamide + L-glutamine = D-erythro-1-(imidazol-4-yl)glycerol 3-phosphate + 5-amino-1-(5-phospho-beta-D-ribosyl)imidazole-4-carboxamide + L-glutamate + H(+). Its pathway is amino-acid biosynthesis; L-histidine biosynthesis; L-histidine from 5-phospho-alpha-D-ribose 1-diphosphate: step 5/9. Its function is as follows. IGPS catalyzes the conversion of PRFAR and glutamine to IGP, AICAR and glutamate. The HisF subunit catalyzes the cyclization activity that produces IGP and AICAR from PRFAR using the ammonia provided by the HisH subunit. The chain is Imidazole glycerol phosphate synthase subunit HisF from Shewanella sp. (strain MR-4).